We begin with the raw amino-acid sequence, 490 residues long: Bifunctional IPC transferase and DIPP synthase (490 aa).

Residues 72–290 (LMKAVILAAG…RANRALVSAA (219 aa)) are mobA-like NTP transferase. CTP is bound by residues 78–80 (LAA), lysine 91, aspartate 144, and glutamate 180. Glutamate 180 is a Mg(2+) binding site. The interval 291-490 (VKGSGDGFIS…VTLLAVLVSK (200 aa)) is CDP-alcohol phosphatidyltransferases. 4 helical membrane-spanning segments follow: residues 329-349 (FLVGAFSALASFFSIPLAGLL), 389-409 (FLAIIALLYPKTATVAMFAIF), 447-467 (IFLIMIFCLLSAISLQWIFWM), and 468-488 (FLFVAAISLTRVVVTLLAVLV).

The protein in the N-terminal section; belongs to the MobA family. It in the C-terminal section; belongs to the CDP-alcohol phosphatidyltransferase class-I family. In terms of assembly, forms a mixture of monomers and dimers in solution, with prevalence of the monomeric form. It depends on Mg(2+) as a cofactor.

Its subcellular location is the membrane. The catalysed reaction is 1D-myo-inositol 3-phosphate + CTP + H(+) = CDP-1L-myo-inositol + diphosphate. The enzyme catalyses CDP-1L-myo-inositol + 1D-myo-inositol 3-phosphate = bis(1L-myo-inositol) 3,1'-phosphate 1-phosphate + CMP + H(+). Involved in biosynthesis of di-myo-inositol phosphate (DIP), a widespread organic solute in microorganisms adapted to hot environments. Catalyzes the condensation of CTP and L-myo-inositol-1-phosphate into CDP-L-myo-inositol, as well as the biosynthesis of di-myo-inositol-1,3'-phosphate-1'-phosphate (DIPP) from CDP-L-myo-inositol and L-myo-inositol-1-phosphate. The cytidylyltransferase is absolutely specific for CTP and L-myo-inositol-1-P. The DIPP synthase uses only L-myoinositol-1-phosphate as an alcohol acceptor, but CDP-glycerol, as well as CDP-L-myo-inositol and CDP-D-myoinositol, are recognized as alcohol donors. The polypeptide is Bifunctional IPC transferase and DIPP synthase (Archaeoglobus fulgidus (strain ATCC 49558 / DSM 4304 / JCM 9628 / NBRC 100126 / VC-16)).